Here is a 291-residue protein sequence, read N- to C-terminus: Lipoyl synthase (291 aa).

The [4Fe-4S] cluster site is built by Cys35, Cys40, Cys46, Cys61, Cys65, Cys68, and Ser273. The 216-residue stretch at 47 to 262 (FGKRQATFLI…KERALTMGFE (216 aa)) folds into the Radical SAM core domain.

This sequence belongs to the radical SAM superfamily. Lipoyl synthase family. [4Fe-4S] cluster is required as a cofactor.

It is found in the cytoplasm. The enzyme catalyses [[Fe-S] cluster scaffold protein carrying a second [4Fe-4S](2+) cluster] + N(6)-octanoyl-L-lysyl-[protein] + 2 oxidized [2Fe-2S]-[ferredoxin] + 2 S-adenosyl-L-methionine + 4 H(+) = [[Fe-S] cluster scaffold protein] + N(6)-[(R)-dihydrolipoyl]-L-lysyl-[protein] + 4 Fe(3+) + 2 hydrogen sulfide + 2 5'-deoxyadenosine + 2 L-methionine + 2 reduced [2Fe-2S]-[ferredoxin]. The protein operates within protein modification; protein lipoylation via endogenous pathway; protein N(6)-(lipoyl)lysine from octanoyl-[acyl-carrier-protein]: step 2/2. Functionally, catalyzes the radical-mediated insertion of two sulfur atoms into the C-6 and C-8 positions of the octanoyl moiety bound to the lipoyl domains of lipoate-dependent enzymes, thereby converting the octanoylated domains into lipoylated derivatives. The chain is Lipoyl synthase from Citrifermentans bemidjiense (strain ATCC BAA-1014 / DSM 16622 / JCM 12645 / Bem) (Geobacter bemidjiensis).